A 544-amino-acid polypeptide reads, in one-letter code: Serine/threonine-protein kinase PAK 1 (544 aa).

The segment at 1–79 is disordered; the sequence is MSNNGLDVQD…KERPEISLPS (79 aa). S2 carries the N-acetylserine modification. Phosphoserine; by PKB and autocatalysis is present on S21. S57 bears the Phosphoserine; by autocatalysis mark. The span at 68–79 shows a compositional bias: basic and acidic residues; sequence KEKERPEISLPS. Residues 70-140 are autoregulatory region; it reads KERPEISLPS…YNSKKTSNSQ (71 aa). The CRIB domain maps to 75–88; it reads ISLPSDFEHTIHVG. The interval 75–105 is GTPase-binding; it reads ISLPSDFEHTIHVGFDAVTGEFTGMPEQWAR. T84 carries the phosphothreonine; by OXSR1 modification. S115 carries the phosphoserine modification. Residues Y131 and Y142 each carry the phosphotyrosine modification. Residues S144 and S149 each carry the phosphoserine; by autocatalysis modification. The span at 150 to 166 shows a compositional bias: polar residues; that stretch reads AEDYNSSNTLNVKTVSE. The tract at residues 150–195 is disordered; it reads AEDYNSSNTLNVKTVSETPAVPPVSEDEDDDDDATPPPVIAPRPEH. At Y153 the chain carries Phosphotyrosine; by JAK2. A Phosphoserine modification is found at S174. A compositionally biased stretch (acidic residues) spans 174–183; it reads SEDEDDDDDA. T184 is modified (phosphothreonine). S198 is modified (phosphoserine; by autocatalysis). The residue at position 200 (Y200) is a Phosphotyrosine; by JAK2. Position 203 is a phosphoserine; by autocatalysis (S203). A disordered region spans residues 209–250; the sequence is PVTPTRDVATSPISPTENNTTPPDALTRNTEKQKKKPKMSDE. 2 positions are modified to phosphothreonine: T211 and T218. Residues S219 and S222 each carry the phosphoserine modification. Over residues 219-230 the composition is skewed to polar residues; it reads SPISPTENNTTP. 3 positions are modified to phosphothreonine: T224, T228, and T229. Positions 269 to 520 constitute a Protein kinase domain; that stretch reads YTRFEKIGQG…AKELLQHQFL (252 aa). 275–283 contacts ATP; that stretch reads IGQGASGTV. Y284 carries the phosphotyrosine; by JAK2 modification. ATP is bound at residue K298. D388 acts as the Proton acceptor in catalysis. Phosphothreonine; by autocatalysis, BRSK2 and PDPK1 is present on T422.

The protein belongs to the protein kinase superfamily. STE Ser/Thr protein kinase family. STE20 subfamily. Homodimer in its autoinhibited state. Active as monomer. Interacts with GIT1. Component of cytoplasmic complexes, which also contains PXN, ARHGEF7 and GIT1. Interacts with NISCH. Interacts with DVL1; mediates the formation of a DVL1, MUSK and PAK1 ternary complex involved in AChR clustering. Binds to the caspase-cleaved p110 isoform of CDC2L1 and CDC2L2, p110C, but not the full-length proteins. Interacts with ARHGEF7. Interacts with SCRIB. Interacts with PDPK1. Interacts (via kinase domain) with RAF1. Interacts with NCK1 and NCK2. Interacts with TBCB. Interacts with BRSK2. Interacts tightly with GTP-bound but not GDP-bound CDC42/P21 and RAC1. Interacts with SNAI1. Interacts with CIB1 (via N-terminal region); the interaction is direct, promotes PAK1 activity and occurs in a calcium-dependent manner. Interacts with INPP5K. Interacts with gamma-tubulin. Interacts with RHOU; the interaction promotes PAK1 activation. The cofactor is Mg(2+). Post-translationally, autophosphorylated in trans, meaning that in a dimer, one kinase molecule phosphorylates the other one. Activated by autophosphorylation at Thr-422 in response to a conformation change, triggered by interaction with GTP-bound CDC42 or RAC1. Activated by phosphorylation at Thr-422 by PDPK1. Phosphorylated by JAK2 in response to PRL; this increases PAK1 kinase activity. Phosphorylated at Ser-21 by PKB/AKT; this reduces interaction with NCK1 and association with focal adhesion sites. Activated by phosphorylation at Thr-422 by BRSK2. Upon DNA damage, phosphorylated at Thr-211 and translocates to the nucleoplasm. Phosphorylated at tyrosine residues, which can be enhanced by NTN1. Expressed predominantly in the brain, with higher expression in neuronal groups associated with motor function, and at lower levels in the spleen.

It is found in the cytoplasm. The protein localises to the cell junction. It localises to the focal adhesion. Its subcellular location is the cell projection. The protein resides in the lamellipodium. It is found in the cell membrane. The protein localises to the ruffle membrane. It localises to the invadopodium. Its subcellular location is the nucleus. The protein resides in the nucleoplasm. It is found in the chromosome. The protein localises to the cytoskeleton. It localises to the microtubule organizing center. Its subcellular location is the centrosome. It catalyses the reaction L-seryl-[protein] + ATP = O-phospho-L-seryl-[protein] + ADP + H(+). The catalysed reaction is L-threonyl-[protein] + ATP = O-phospho-L-threonyl-[protein] + ADP + H(+). With respect to regulation, phosphorylation of Thr-84 by OXSR1 inhibits activation. Activated by binding small G proteins. Binding of GTP-bound CDC42 or RAC1 to the autoregulatory region releases monomers from the autoinhibited dimer, and enables activation by phosphorylation of Thr-422. In terms of biological role, protein kinase involved in intracellular signaling pathways downstream of integrins and receptor-type kinases that plays an important role in cytoskeleton dynamics, in cell adhesion, migration, proliferation, apoptosis, mitosis, and in vesicle-mediated transport processes. Can directly phosphorylate BAD and protects cells against apoptosis. Activated by interaction with CDC42 and RAC1. Functions as a GTPase effector that links the Rho-related GTPases CDC42 and RAC1 to the JNK MAP kinase pathway. Phosphorylates and activates MAP2K1, and thereby mediates activation of downstream MAP kinases. Involved in the reorganization of the actin cytoskeleton, actin stress fibers and of focal adhesion complexes. Phosphorylates the tubulin chaperone TBCB and thereby plays a role in the regulation of microtubule biogenesis and organization of the tubulin cytoskeleton. Plays a role in the regulation of insulin secretion in response to elevated glucose levels. Part of a ternary complex that contains PAK1, DVL1 and MUSK that is important for MUSK-dependent regulation of AChR clustering during the formation of the neuromuscular junction (NMJ). Activity is inhibited in cells undergoing apoptosis, potentially due to binding of CDC2L1 and CDC2L2. Phosphorylates MYL9/MLC2. Phosphorylates RAF1 at 'Ser-338' and 'Ser-339' resulting in: activation of RAF1, stimulation of RAF1 translocation to mitochondria, phosphorylation of BAD by RAF1, and RAF1 binding to BCL2. Phosphorylates SNAI1 at 'Ser-246' promoting its transcriptional repressor activity by increasing its accumulation in the nucleus. In podocytes, promotes NR3C2 nuclear localization. Required for atypical chemokine receptor ACKR2-induced phosphorylation of LIMK1 and cofilin (CFL1) and for the up-regulation of ACKR2 from endosomal compartment to cell membrane, increasing its efficiency in chemokine uptake and degradation. In synapses, seems to mediate the regulation of F-actin cluster formation performed by SHANK3, maybe through CFL1 phosphorylation and inactivation. Plays a role in RUFY3-mediated facilitating gastric cancer cells migration and invasion. In response to DNA damage, phosphorylates MORC2 which activates its ATPase activity and facilitates chromatin remodeling. In neurons, plays a crucial role in regulating GABA(A) receptor synaptic stability and hence GABAergic inhibitory synaptic transmission through its role in F-actin stabilization. In hippocampal neurons, necessary for the formation of dendritic spines and excitatory synapses; this function is dependent on kinase activity and may be exerted by the regulation of actomyosin contractility through the phosphorylation of myosin II regulatory light chain (MLC). Along with GIT1, positively regulates microtubule nucleation during interphase. Phosphorylates FXR1, promoting its localization to stress granules and activity. Phosphorylates ILK on 'Thr-173' and 'Ser-246', promoting nuclear export of ILK. The polypeptide is Serine/threonine-protein kinase PAK 1 (Rattus norvegicus (Rat)).